The chain runs to 196 residues: Pyridoxal 5'-phosphate synthase subunit PdxT (196 aa).

L-glutamine is bound at residue 47-49 (GES). The Nucleophile role is filled by C79. L-glutamine contacts are provided by residues R106 and 134 to 135 (IR). Catalysis depends on charge relay system residues H170 and E172.

The protein belongs to the glutaminase PdxT/SNO family. In terms of assembly, in the presence of PdxS, forms a dodecamer of heterodimers. Only shows activity in the heterodimer.

It catalyses the reaction aldehydo-D-ribose 5-phosphate + D-glyceraldehyde 3-phosphate + L-glutamine = pyridoxal 5'-phosphate + L-glutamate + phosphate + 3 H2O + H(+). The catalysed reaction is L-glutamine + H2O = L-glutamate + NH4(+). Its pathway is cofactor biosynthesis; pyridoxal 5'-phosphate biosynthesis. Catalyzes the hydrolysis of glutamine to glutamate and ammonia as part of the biosynthesis of pyridoxal 5'-phosphate. The resulting ammonia molecule is channeled to the active site of PdxS. The polypeptide is Pyridoxal 5'-phosphate synthase subunit PdxT (Bacillus pumilus (strain SAFR-032)).